The chain runs to 393 residues: Potassium channel subfamily K member 4 (393 aa).

Residues 1 to 3 (MRS) are Cytoplasmic-facing. The helical transmembrane segment at 4–24 (TTLLALLALVLLYLVSGALVF) threads the bilayer. Residues 25–87 (RALEQPHEQQ…NSTSNSSHSA (63 aa)) are Extracellular-facing. N-linked (GlcNAc...) asparagine glycosylation is found at Asn78 and Asn82. Positions 88–102 (WDLGSAFFFSGTIIT) form an intramembrane region, helical. K(+)-binding residues include Thr103, Ile104, Gly105, and Tyr106. Residues 103–108 (TIGYGN) form a selectivity filter 1 region. Residues 103-109 (TIGYGNV) lie within the membrane without spanning it. Topologically, residues 110-117 (ALRTDAGR) are extracellular. The helical transmembrane segment at 118–150 (LFCIFYALVGIPLFGILLAGVGDRLGSSLRHGI) threads the bilayer. Residues 151–172 (GHIEAIFLKWHVPPELVRVLSA) are Cytoplasmic-facing. The helical transmembrane segment at 173-194 (MLFLLIGCLLFVLTPTFVFCYM) threads the bilayer. Topologically, residues 195 to 199 (EDWSK) are extracellular. An intramembrane region (helical) is located at residues 200 to 213 (LEAIYFVIVTLTTV). K(+) contacts are provided by Thr212, Val213, Gly214, and Phe215. Positions 212 to 217 (TVGFGD) are selectivity filter 2. Residues 214 to 219 (GFGDYV) lie within the membrane without spanning it. Residues 220–233 (AGADPRQDSPAYQP) are Extracellular-facing. A helical membrane pass occupies residues 234 to 260 (LVWFWILLGLAYFASVLTTIGNWLRVV). The Cytoplasmic segment spans residues 261–393 (SRRTRAEMGG…GRPRDKGVPV (133 aa)). The segment at 285–393 (RVTQRAGPAA…GRPRDKGVPV (109 aa)) is disordered. Residues 319-332 (SPSPPEKAQPPSPP) show a composition bias toward pro residues. Over residues 365 to 384 (PRGRRRPNPPRKPVRPRGPG) the composition is skewed to basic residues.

This sequence belongs to the two pore domain potassium channel (TC 1.A.1.8) family. As to quaternary structure, homodimer; disulfide-linked. Forms heterodimers with other 2-pore domain K(+) channel subunits, such as KCNK2 and KCNK10. In terms of processing, N-glycosylated.

Its subcellular location is the cell membrane. The protein localises to the cell projection. It is found in the axon. It carries out the reaction K(+)(in) = K(+)(out). The enzyme catalyses Rb(+)(in) = Rb(+)(out). It catalyses the reaction Cs(+)(in) = Cs(+)(out). Its activity is regulated as follows. Activated by mechanical stretch and arachidonic acid. In terms of biological role, k(+) channel that conducts voltage-dependent outward rectifying currents upon membrane depolarization. Voltage sensing is coupled to K(+) electrochemical gradient in an 'ion flux gating' mode where outward but not inward ion flow opens the gate. Converts to voltage-independent 'leak' conductance mode upon stimulation by various stimuli including mechanical membrane stretch, basic pH, heat and lipids. Homo- and heterodimerizes to form functional channels with distinct regulatory and gating properties. At trigeminal A-beta afferent nerves, the heterodimer of KCNK2/TREK-1 and KCNK4/TRAAK is mostly coexpressed at nodes of Ranvier where it conducts voltage-independent mechanosensitive and thermosensitive currents, allowing rapid action potential repolarization, high speed and high frequence saltatory conduction on myelinated nerves to ensure prompt sensory responses. Permeable to other monovalent cations such as Rb(+) and Cs(+). The protein is Potassium channel subfamily K member 4 of Homo sapiens (Human).